Consider the following 322-residue polypeptide: Cytochrome c biogenesis protein CcsA (322 aa).

A run of 7 helical transmembrane segments spans residues 9 to 29, 43 to 63, 70 to 90, 142 to 162, 226 to 246, 259 to 274, and 287 to 307; these read ILTH…LITL, GMIA…IYSG, LYES…VPKI, MLLS…LLVI, VISL…VWAN, ETWA…IYSH, and AIVA…VNLL.

It belongs to the CcmF/CycK/Ccl1/NrfE/CcsA family. In terms of assembly, may interact with Ccs1.

It is found in the plastid. Its subcellular location is the chloroplast thylakoid membrane. Its function is as follows. Required during biogenesis of c-type cytochromes (cytochrome c6 and cytochrome f) at the step of heme attachment. In Chloranthus spicatus (Chulantree), this protein is Cytochrome c biogenesis protein CcsA.